The primary structure comprises 1144 residues: Type II inositol polyphosphate 5-phosphatase 14 (1144 aa).

Disordered stretches follow at residues 15–67 (ASLV…FDSS) and 81–118 (GRTS…DDIE). WD repeat units follow at residues 158–196 (ETQT…EVGC), 216–255 (VPTS…TTTA), 269–307 (AHRG…KSLV), 445–483 (EDTR…LREV), and 524–561 (SHNE…PLDS). Catalytic stretches follow at residues 791 to 807 (DLVA…FGIT) and 870 to 885 (KKRI…YRDN). A Glycyl lysine isopeptide (Lys-Gly) (interchain with G-Cter in ubiquitin) cross-link involves residue Lys949. The segment covering 1111-1131 (TTMTKNLEGSTRYQTDANRGG) has biased composition (polar residues). The tract at residues 1111 to 1144 (TTMTKNLEGSTRYQTDANRGGSTRHRTDDSTRRG) is disordered. The segment covering 1135–1144 (HRTDDSTRRG) has biased composition (basic and acidic residues).

It belongs to the inositol polyphosphate 5-phosphatase family. Mg(2+) is required as a cofactor. In terms of tissue distribution, expressed in young seedlings and flowers.

The enzyme catalyses a 1,2-diacyl-sn-glycero-3-phospho-(1D-myo-inositol-4,5-bisphosphate) + H2O = a 1,2-diacyl-sn-glycero-3-phospho-(1D-myo-inositol 4-phosphate) + phosphate. The catalysed reaction is a 1,2-diacyl-sn-glycero-3-phospho-(1D-myo-inositol-3,4,5-trisphosphate) + H2O = a 1,2-diacyl-sn-glycero-3-phospho-(1D-myo-inositol-3,4-bisphosphate) + phosphate. It carries out the reaction 1D-myo-inositol 1,4,5-trisphosphate + H2O = 1D-myo-inositol 1,4-bisphosphate + phosphate. Functionally, has phosphatase activity toward PtdIns(4,5)P2, PtdIns(3,4,5)P3 and Ins(1,4,5)P3. This Arabidopsis thaliana (Mouse-ear cress) protein is Type II inositol polyphosphate 5-phosphatase 14.